The sequence spans 751 residues: Proton-associated sugar transporter A (751 aa).

Helical transmembrane passes span 93–113 (ILFGIEFSYAMETAYVTPVLL), 123–143 (SLVWFISPILGFLLQPLLGAW), 155–175 (RPFILVLAIGALLGLSLLLNG), 191–211 (WGILLTVCGVVLMDFSADSAD), 233–253 (IHALMAGLGGGFGYVVGGIHW), and 268–288 (VIYIFTAITLSVTTVFTLVSI). Thr500 is modified (phosphothreonine). The next 6 membrane-spanning stretches (helical) occupy residues 536 to 556 (GWLSFEGMLLFYTDFMGEVVF), 576 to 596 (VTMGCWGMCIYAFSAAFYSAI), 606 to 626 (VRTLYFIAYLLFGLGTGLATL), 630 to 650 (LYVVLSLCTHYGILFSTLCTL), 688 to 708 (FLAQILVSLVLGPLTSAVGSA), and 710 to 730 (GVMYFASLVSFLGCLYSSLCV).

This sequence belongs to the glycoside-pentoside-hexuronide (GPH) cation symporter transporter (TC 2.A.2) family. Predominantly expressed in brain.

It is found in the membrane. It catalyses the reaction D-galactose(in) + H(+)(in) = D-galactose(out) + H(+)(out). The catalysed reaction is D-glucose(out) + H(+)(out) = D-glucose(in) + H(+)(in). In terms of biological role, proton-associated glucose transporter in the brain. In Rattus norvegicus (Rat), this protein is Proton-associated sugar transporter A.